Consider the following 139-residue polypeptide: Putative nickel-responsive regulator (139 aa).

The Ni(2+) site is built by histidine 79, histidine 90, histidine 92, and cysteine 98.

It belongs to the transcriptional regulatory CopG/NikR family. Ni(2+) is required as a cofactor.

Its function is as follows. Transcriptional regulator. The sequence is that of Putative nickel-responsive regulator from Solidesulfovibrio magneticus (strain ATCC 700980 / DSM 13731 / RS-1) (Desulfovibrio magneticus).